The following is a 75-amino-acid chain: MTEKRVEQLESRVNDLECQLAFQEQTIEELNEALSQQQMLITRMQDQMKFVVGKVKNMDGSNLADASEETPPPHY.

It belongs to the SlyX family.

The sequence is that of Protein SlyX homolog from Vibrio atlanticus (strain LGP32) (Vibrio splendidus (strain Mel32)).